We begin with the raw amino-acid sequence, 376 residues long: Small RNA 2'-O-methyltransferase (376 aa).

Positions 49, 67, and 103 each coordinate S-adenosyl-L-methionine. Positions 121, 124, 125, and 171 each coordinate Mg(2+).

This sequence belongs to the methyltransferase superfamily. HEN1 family. Requires Mg(2+) as cofactor.

It is found in the cytoplasm. The enzyme catalyses small RNA 3'-end nucleotide + S-adenosyl-L-methionine = small RNA 3'-end 2'-O-methylnucleotide + S-adenosyl-L-homocysteine + H(+). Functionally, methyltransferase that adds a 2'-O-methyl group at the 3'-end of piRNAs, a class of 24 to 30 nucleotide RNAs that are generated by a Dicer-independent mechanism and are primarily derived from transposons and other repeated sequence elements. This probably protects the 3'-end of piRNAs from uridylation activity and subsequent degradation. Stabilization of piRNAs is essential for gametogenesis. In Gallus gallus (Chicken), this protein is Small RNA 2'-O-methyltransferase (HENMT1).